The following is a 930-amino-acid chain: Translation initiation factor IF-2 (930 aa).

Positions 29–316 (GEFVKSASST…GRKSKRAKRA (288 aa)) are disordered. The segment covering 81–120 (RPGPKPGPPVAQQPAAPAAPPAAPPAPPTPAAAPPSPAPA) has biased composition (pro residues). Positions 121–135 (APAAATPAEPAAPSA) are enriched in low complexity. Pro residues-rich tracts occupy residues 136–155 (RPGP…PGAP) and 180–191 (PRPQGPGGPRPG). The segment covering 192–204 (PGAGGPRPGGGPR) has biased composition (gly residues). Over residues 228–240 (GGGPRPGGGPRPT) the composition is skewed to pro residues. The span at 241–301 (PGGAGRPGGG…GAAGAFGRPG (61 aa)) shows a compositional bias: gly residues. Over residues 305–314 (KRGRKSKRAK) the composition is skewed to basic residues. The tr-type G domain occupies 426-598 (IRPPVVTVMG…VILTADASLD (173 aa)). Residues 435 to 442 (GHVDHGKT) are G1. Residue 435-442 (GHVDHGKT) participates in GTP binding. A G2 region spans residues 460–464 (GITQH). The tract at residues 485-488 (DTPG) is G3. GTP is bound by residues 485 to 489 (DTPGH) and 539 to 542 (NKID). Positions 539-542 (NKID) are G4. A G5 region spans residues 575-577 (SAK).

Belongs to the TRAFAC class translation factor GTPase superfamily. Classic translation factor GTPase family. IF-2 subfamily.

It is found in the cytoplasm. Its function is as follows. One of the essential components for the initiation of protein synthesis. Protects formylmethionyl-tRNA from spontaneous hydrolysis and promotes its binding to the 30S ribosomal subunits. Also involved in the hydrolysis of GTP during the formation of the 70S ribosomal complex. This Mycolicibacterium vanbaalenii (strain DSM 7251 / JCM 13017 / BCRC 16820 / KCTC 9966 / NRRL B-24157 / PYR-1) (Mycobacterium vanbaalenii) protein is Translation initiation factor IF-2.